A 401-amino-acid polypeptide reads, in one-letter code: Bone morphogenetic protein 4 (401 aa).

An N-terminal signal peptide occupies residues 1-19 (MIPGNRMLMVILLSQVLLG). Positions 20-287 (GTNYASLIPD…GHALTRRSKR (268 aa)) are excised as a propeptide. Asn141, Asn204, and Asn238 each carry an N-linked (GlcNAc...) asparagine glycan. The tract at residues 279 to 299 (HALTRRSKRSPKQQRPRKKNK) is disordered. Positions 280 to 299 (ALTRRSKRSPKQQRPRKKNK) are enriched in basic residues. Cystine bridges form between Cys301–Cys366, Cys330–Cys398, and Cys334–Cys400. N-linked (GlcNAc...) asparagine glycans are attached at residues Asn343 and Asn358.

It belongs to the TGF-beta family. Homodimer; disulfide-linked. Forms heterodimers with the TGF-beta family member derriere. Part of a complex consisting of twsg1 and chrd. Interacts with tsku.

The protein localises to the secreted. It localises to the extracellular space. The protein resides in the extracellular matrix. Functionally, posterior-ventralizing factor in Xenopus mesoderm induction. Induces posteroventral mesoderm and counteracts dorsalizing signals such as activin. This Xenopus laevis (African clawed frog) protein is Bone morphogenetic protein 4 (bmp4).